The following is a 267-amino-acid chain: Transcription factor HES-1 (267 aa).

Residues 1–45 (MPADLMEKNSSSPVAATPASMSNTPDKPKTASEHRKSSKPIMEKR) form a disordered region. Polar residues predominate over residues 8–25 (KNSSSPVAATPASMSNTP). Basic and acidic residues predominate over residues 26-35 (DKPKTASEHR). The bHLH domain occupies 34–91 (HRKSSKPIMEKRRRARINESLGQLKTLILDALKKDSSRHSKLEKADILEMTVKHLRNL). Residues 110 to 143 (YRAGFSECMNEVTRFLSTCEGVNTDVRTRLLGHL) enclose the Orange domain. A WRPW motif motif is present at residues 264-267 (WRPW).

Transcription repression requires formation of a complex with a corepressor protein of the Groucho/TLE family. Interacts with the bHLH protein hes2, and binds DNA in the form of a heterodimer with the bHLH protein hey1/hrt1. Interacts with the bHLH protein hes6; this interaction may inhibit the transcriptional repressor activity.

The protein localises to the nucleus. Transcriptional repressor of a subset of early mesodermal genes including myod1 and t/bra. Binds DNA on N-box motifs: 5'-CACNAG-3'. Acts as a negative regulator of myogenesis, mediating Notch signaling to repress expression of myod1. This Xenopus tropicalis (Western clawed frog) protein is Transcription factor HES-1.